The sequence spans 583 residues: Mitogen-activated protein kinase 4 (583 aa).

Positions 20 to 312 (FIDFQPLGFG…AEMGLQHPYM (293 aa)) constitute a Protein kinase domain. ATP is bound by residues 26–34 (LGFGVNGLV) and K49. D149 acts as the Proton acceptor in catalysis. The residue at position 186 (S186) is a Phosphoserine; by PAK1, PAK2 and PAK3. Residues 186 to 188 (SEG) carry the SEG motif motif. Residues 328-333 (FRIEDE) carry the FRIEDE motif motif. Basic and acidic residues-rich tracts occupy residues 366-379 (DRCQ…RDPR) and 391-410 (VDPR…QSHS). Residues 366–410 (DRCQDASEVQRDPRAGSTPLAEDVQVDPRKDSQSSSERFLEQSHS) form a disordered region. Position 430 is a phosphoserine (S430). Residues 495–531 (STQSGSERASPPPDAPEPRLSASPPGHPTPIDGGASP) form a disordered region.

The protein belongs to the protein kinase superfamily. CMGC Ser/Thr protein kinase family. MAP kinase subfamily. Homodimer. Heterodimer with ERK3/MAPK6. Interacts with (via FRIEDE motif) MAPKAPK5. Mg(2+) serves as cofactor. Phosphorylated at Ser-186 by PAK1, PAK2 and PAK3 resulting in catalytic activation. Phosphorylated by MAPKAPK5 at other sites.

Its subcellular location is the cytoplasm. It is found in the nucleus. It catalyses the reaction L-seryl-[protein] + ATP = O-phospho-L-seryl-[protein] + ADP + H(+). The enzyme catalyses L-threonyl-[protein] + ATP = O-phospho-L-threonyl-[protein] + ADP + H(+). Activated by phosphorylation at Ser-186. Its function is as follows. Atypical MAPK protein. Phosphorylates microtubule-associated protein 2 (MAP2) and MAPKAPK5. The precise role of the complex formed with MAPKAPK5 is still unclear, but the complex follows a complex set of phosphorylation events: upon interaction with atypical MAPKAPK5, ERK4/MAPK4 is phosphorylated at Ser-186 and then mediates phosphorylation and activation of MAPKAPK5, which in turn phosphorylates ERK4/MAPK4. May promote entry in the cell cycle. The sequence is that of Mitogen-activated protein kinase 4 (Mapk4) from Mus musculus (Mouse).